Consider the following 228-residue polypeptide: Ephrin-A5 (228 aa).

The signal sequence occupies residues 1–20 (MPHVEMLLLAVAALWVCVRG). Residues 29–162 (ADRYAVYWNS…KLKVFVRPAN (134 aa)) enclose the Ephrin RBD domain. N-linked (GlcNAc...) asparagine glycosylation occurs at Asn-37. 2 cysteine pairs are disulfide-bonded: Cys-62–Cys-102 and Cys-90–Cys-151. Asn-203 carries the GPI-anchor amidated asparagine lipid modification. The propeptide at 204 to 228 (AAQTPRIPIRLLATLLFLLAMLLIL) is removed in mature form.

Belongs to the ephrin family. Expressed in a graded fashion across the tectum being more strongly expressed towards the posterior pole.

The protein resides in the cell membrane. Functionally, cell surface GPI-bound ligand for Eph receptors, a family of receptor tyrosine kinases which are crucial for migration, repulsion and adhesion during neuronal, vascular and epithelial development. Binds promiscuously Eph receptors residing on adjacent cells, leading to contact-dependent bidirectional signaling into neighboring cells. Induces compartmentalized signaling within a caveolae-like membrane microdomain when bound to the extracellular domain of its cognate receptor. This signaling event requires the activity of the Fyn tyrosine kinase. Activates the EPHA3 receptor to regulate cell-cell adhesion and cytoskeletal organization. With the receptor EPHA2 may regulate lens fiber cells shape and interactions and be important for lens transparency maintenance. May function actively to stimulate axon fasciculation. Induces growth cone collapse and repulsion of retinal ganglion cell axons. The chain is Ephrin-A5 (EFNA5) from Gallus gallus (Chicken).